The following is a 185-amino-acid chain: UPF0669 protein C6orf120 homolog (185 aa).

Positions 1-23 (MATPWRCALLMILASQVVILVKC) are cleaved as a signal peptide. The N-linked (GlcNAc...) asparagine glycan is linked to N47.

The protein belongs to the UPF0669 family.

The protein resides in the secreted. Its function is as follows. May be involved in induction of apoptosis in CD4(+) T-cells, but not CD8(+) T-cells or hepatocytes. This Rattus norvegicus (Rat) protein is UPF0669 protein C6orf120 homolog.